Here is a 132-residue protein sequence, read N- to C-terminus: Transmembrane protein 170B (132 aa).

Topologically, residues 1 to 37 are extracellular; that stretch reads MKAEGGDHSMINLSVQQVLSLWAHGTVLRNLTEMWYW. Residue Asn12 is glycosylated (N-linked (GlcNAc...) asparagine). A helical membrane pass occupies residues 38–58; it reads IFLWALFSSLFVHGAAGVLMF. Residues 59–68 are Cytoplasmic-facing; it reads VMLQRHRQGR. A helical membrane pass occupies residues 69–89; the sequence is VISVIAVSIGFLASVTGAMIT. The Extracellular portion of the chain corresponds to 90–104; the sequence is SAAVAGIYRVAGKNM. A helical transmembrane segment spans residues 105 to 125; the sequence is APLEALVWGVGQTVLTLIISF. At 126–132 the chain is on the cytoplasmic side; sequence SRILATL.

Belongs to the TMEM170 family. As to quaternary structure, interacts with CTNNB1. In terms of tissue distribution, expressed in normal breast tissues. Down-regulated in breast cancer cells (at protein level).

The protein resides in the cell membrane. Its function is as follows. Negatively regulates the canonical Wnt signaling in breast cancer cells. Exerts an inhibitory effect on breast cancer growth by inhibiting CTNNB1 stabilization and nucleus translocation, which reduces the activity of Wnt targets. This Homo sapiens (Human) protein is Transmembrane protein 170B (TMEM170B).